A 225-amino-acid chain; its full sequence is Enolase-phosphatase E1 (225 aa).

It belongs to the HAD-like hydrolase superfamily. MasA/MtnC family. In terms of assembly, monomer. Requires Mg(2+) as cofactor.

It catalyses the reaction 5-methylsulfanyl-2,3-dioxopentyl phosphate + H2O = 1,2-dihydroxy-5-(methylsulfanyl)pent-1-en-3-one + phosphate. It functions in the pathway amino-acid biosynthesis; L-methionine biosynthesis via salvage pathway; L-methionine from S-methyl-5-thio-alpha-D-ribose 1-phosphate: step 3/6. The protein operates within amino-acid biosynthesis; L-methionine biosynthesis via salvage pathway; L-methionine from S-methyl-5-thio-alpha-D-ribose 1-phosphate: step 4/6. In terms of biological role, bifunctional enzyme that catalyzes the enolization of 2,3-diketo-5-methylthiopentyl-1-phosphate (DK-MTP-1-P) into the intermediate 2-hydroxy-3-keto-5-methylthiopentenyl-1-phosphate (HK-MTPenyl-1-P), which is then dephosphorylated to form the acireductone 1,2-dihydroxy-3-keto-5-methylthiopentene (DHK-MTPene). The protein is Enolase-phosphatase E1 of Shewanella halifaxensis (strain HAW-EB4).